A 505-amino-acid chain; its full sequence is Flagellin (505 aa).

This sequence belongs to the bacterial flagellin family.

It is found in the secreted. Its subcellular location is the bacterial flagellum. In terms of biological role, flagellin is the subunit protein which polymerizes to form the filaments of bacterial flagella. This Salmonella budapest protein is Flagellin (fliC).